A 602-amino-acid polypeptide reads, in one-letter code: MVVDDPCLLNIPTSFYHSTNQELDLSNKTFKREVGGPYSVMMDNKIGKPHLLETDQQNFFQDSKPTNEVHAVKGERENSGESEEEEDEDDDDDDDDDDDDEEGEDEDEVNYKREQIIVEVNLNNQTLNVSKGDKGVPKDPSQIKTSSDDEGGDSGEDDQDSHEDEENNPLPLDGQTNMQHGNQDQKTENSDMVGGDGTIPANSTKEQGKGGEAPKRKKKPKSPSDKAKSEEKETLTCDKCPRVFNTRWYLEKHMNVTHRRMQICDKCGKKFVLESELSLHLQTDCEKNIQCITCNKTFKKLWSLHEHIKIVHGYAEKKFSCEICEKKFYTMAHVRKHLVAHTKDMPFTCETCGKSFKRSMSLKVHSLQHSGEKPFRCENCDERFQYKYQLRSHMSIHIGHKQFMCQWCGKDFNMKQYFDEHMKTHTGEKPFICEICGKSFTSRPNMKRHRRTHTGEKPYPCDVCGMRFRFSNMLKAHKEKCFRVTSPVGVPPALQITLNNPTLSNPSQGISNLPNAHIPPPSPTPPLNLNALNPLPPRPIPHPFSHLHLHPHSHTHHLAVPPVPHLPPPPALFKSEALNHRGQNDDSFLRHLAEKTSAGQHH.

The tract at residues 60 to 232 is disordered; sequence FQDSKPTNEV…PSDKAKSEEK (173 aa). The segment covering 65-79 has biased composition (basic and acidic residues); it reads PTNEVHAVKGERENS. Acidic residues-rich tracts occupy residues 80–108 and 148–167; these read GESE…DEDE and DDEG…DEEN. Over residues 222–232 the composition is skewed to basic and acidic residues; sequence SPSDKAKSEEK. Residues 235 to 258 form a C2H2-type 1 zinc finger; sequence LTCDKCPRVFNTRWYLEKHMNVTH. Residues 262–284 form a C2H2-type 2; degenerate zinc finger; sequence QICDKCGKKFVLESELSLHLQTD. 6 C2H2-type zinc fingers span residues 289-312, 319-341, 347-369, 375-397, 403-425, and 431-453; these read IQCI…KIVH, FSCE…LVAH, FTCE…SLQH, FRCE…MSIH, FMCQ…MKTH, and FICE…RRTH. A C2H2-type 9; degenerate zinc finger spans residues 459–482; it reads YPCDVCGMRFRFSNMLKAHKEKCF. A disordered region spans residues 543–575; it reads PFSHLHLHPHSHTHHLAVPPVPHLPPPPALFKS. Over residues 545-557 the composition is skewed to basic residues; the sequence is SHLHLHPHSHTHH. Residues 561–571 are compositionally biased toward pro residues; that stretch reads PPVPHLPPPPA.

Belongs to the krueppel C2H2-type zinc-finger protein family.

Its subcellular location is the nucleus. In terms of biological role, may be involved in transcriptional regulation. This Xenopus laevis (African clawed frog) protein is Zinc finger protein 652-B (znf652-b).